The primary structure comprises 395 residues: Nucleoside diphosphate kinase homolog 7 (395 aa).

One can recognise a DM10 domain in the interval Gln-22–Lys-110.

Belongs to the NDK family. As to quaternary structure, component of sperm flagellar doublet microtubules. Component of the gamma-tubulin ring complex.

The protein resides in the cytoplasm. Its subcellular location is the cytoskeleton. The protein localises to the microtubule organizing center. It is found in the centrosome. It localises to the nucleus. The protein resides in the spindle. Its subcellular location is the cilium axoneme. The protein localises to the flagellum axoneme. It is found in the cell projection. It localises to the cilium. Functionally, possesses an intrinsic kinase activity. Displays 3'-5' exonuclease activity with a preference for single-stranded DNA. Does not seem to have nucleoside diphosphate kinase activity. Functional component of the gamma-tubulin ring complex, implicated in the regulation of the microtubule-nucleating activity of the gamma-tubulin ring complex in centrosomes, in a kinase activity-dependent manner. Part of the dynein-decorated doublet microtubules (DMTs) in cilia axoneme, which is required for motile cilia beating. This chain is Nucleoside diphosphate kinase homolog 7, found in Mus musculus (Mouse).